Reading from the N-terminus, the 201-residue chain is Small ribosomal subunit protein uS4c (201 aa).

The S4 RNA-binding domain occupies 89-157; the sequence is MRLDNILFRL…VQNYIASSDP (69 aa).

It belongs to the universal ribosomal protein uS4 family. Part of the 30S ribosomal subunit. Contacts protein S5. The interaction surface between S4 and S5 is involved in control of translational fidelity.

It localises to the plastid. The protein localises to the chloroplast. In terms of biological role, one of the primary rRNA binding proteins, it binds directly to 16S rRNA where it nucleates assembly of the body of the 30S subunit. Functionally, with S5 and S12 plays an important role in translational accuracy. This Hordeum vulgare (Barley) protein is Small ribosomal subunit protein uS4c (rps4).